We begin with the raw amino-acid sequence, 503 residues long: Maturase K (503 aa).

The protein belongs to the intron maturase 2 family. MatK subfamily.

It localises to the plastid. The protein localises to the chloroplast. Usually encoded in the trnK tRNA gene intron. Probably assists in splicing its own and other chloroplast group II introns. The sequence is that of Maturase K from Caragana arborescens (Siberian pea tree).